Reading from the N-terminus, the 445-residue chain is Mannan endo-1,4-beta-mannosidase 2 (445 aa).

A signal peptide spans 1–27; sequence MAVGNGLILYHILGLASCIALVYFSLG. Trp-110 serves as a coordination point for substrate. Asn-181 is a glycosylation site (N-linked (GlcNAc...) asparagine). Asn-226 contacts substrate. The active-site Proton donor is the Glu-227. Tyr-309 is a substrate binding site. The Nucleophile role is filled by Glu-349. Trp-391 contributes to the substrate binding site.

The protein belongs to the glycosyl hydrolase 5 (cellulase A) family. Expressed in stems and seeds, and at lower levels in roots and leaves.

The protein resides in the secreted. The enzyme catalyses Random hydrolysis of (1-&gt;4)-beta-D-mannosidic linkages in mannans, galactomannans and glucomannans.. The protein is Mannan endo-1,4-beta-mannosidase 2 (MAN2) of Oryza sativa subsp. japonica (Rice).